We begin with the raw amino-acid sequence, 1769 residues long: MSARAAAAKNTAMEETAIWEQHTVTLHRAPGFGFGIAISGGRDNPHFQSGETSIVISDVLKGGPAEGQLQENDRVAMVNGVSMDNVEHAFAVQQLRKSGKNAKITIRRKKKVQIPVSRPDPEPVSENEDSYDEEVHDPRSSRGGLVSRRSEKSWARDRSASRERSLSPRSDRRSVASSQPPKPTKVTLVKSRKNEEYGLRLASHIFVKEISQDSLAARDGNIQEGDVVLKINGTVTENMSLTDAKTLIERSKGKLKMVVQRDERATLLNVPDLSDSIHSANASERDDISEIQSLASDHSGRSHDRPPRHSRSRSPDQRSEPSDHSRHSPQQPSSGSLRSREEERISKPGAVSTPVKHADDHTHKTVEEVVVERNEKQAPSLPEPKPVYAQVGQPDVDLPVSPSDGVLPNSTHEDGILRPSMKLVKFRKGDSVGLRLAGGNDVGIFVAGVLEDSPAAKEGLEEGDQILRVNNVDFTNIIREEAVLFLLDLPKGEEVTILAQKKKDVYRRIVESDVGDSFYIRTHFEYEKESPYGLSFNKGEVFRVVDTLYNGKLGSWLAIRIGKNHKEVERGIIPNKNRAEQLASVQYTLPKTAGGDRADFWRFRGLRSSKRNLRKSREDLSAQPVQTKFPAYERVVLREAGFLRPVTIFGPIADVAREKLAREEPDIYQIAKSEPRDAGTDQRSSGIIRLHTIKQIIDQDKHALLDVTPNAVDRLNYAQWYPIVVFLNPDSKQGVKTMRMRLCPESRKSARKLYERSHKLRKNNHHLFTTTINLNSMNDGWYGALKEAIQQQQNQLVWVSEGKADGATSDDLDLHDDRLSYLSAPGSEYSMYSTDSRHTSDYEDTDTEGGAYTDQELDETLNDEVGTPPESAITRSSEPVREDSSGMHHENQTYPPYSPQAQPQPIHRIDSPGFKTASQQKAEASSPVPYLSPETNPASSTSAVNHNVTLTNVRLEGPTPAPSTSYSPQADSLRTPSTEAAHIMLRDQEPSLPSHVEPAKVYRKDPYPEEMMRQNHVLKQPAVGHPGQRPDKEPNLSYESQPPYVEKQANRDLEQPTYRYDSSSYTDQFSRNYDHRLRYEERIPTYEEQWSYYDDKQPYQPRPSLDNQHPRDLDSRQHPEESSERGSYPRFEEPAPLSYDSRPRYDQPPRTSTLRHEEQPTPGYDMHNRYRPEAQSYSSAGPKASEPKQYFDQYPRSYEQVPSQGFSSKAGHYEPLHGAAVVPPLIPASQHKPEVLPSNTKPLPPPPTLTEEEEDPAMKPQSVLTRVKMFENKRSASLENKKDENHTAGFKPPEVASKPPGAPIIGPKPTPQNQFSEHDKTLYRIPEPQKPQMKPPEDIVRSNHYDPEEDEEYYRKQLSYFDRRSFENKPSTHIPAGHLSEPAKPVHSQNQTNFSSYSSKGKSPEADAPDRSFGEKRYEPVQATPPPPPLPSQYAQPSQPGTSSSLALHTHAKGAHGEGNSISLDFQNSLVSKPDPPPSQNKPATFRPPNREDTVQSTFYPQKSFPDKAPVNGAEQTQKTVTPAYNRFTPKPYTSSARPFERKFESPKFNHNLLPSETAHKPDLSSKAPASPKTLAKAHSRAQPPEFDSGVETFSIHADKPKYQMNNLSTVPKAIPVSPSAVEEDEDEDGHTVVATARGVFNNNGGVLSSIETGVSIIIPQGAIPEGVEQEIYFKVCRDNSILPPLDKEKGETLLSPLVMCGPHGLKFLKPVELRLPHCASMTPDGWSFALKSSDSSSGDPKTWQNKCLPGDPNYLVGANCVSVLIDHF.

The PDZ 1 domain occupies 23 to 110 (TVTLHRAPGF…NAKITIRRKK (88 aa)). A compositionally biased stretch (basic residues) spans 102–112 (AKITIRRKKKV). The interval 102–188 (AKITIRRKKK…QPPKPTKVTL (87 aa)) is disordered. Residues 123–135 (PVSENEDSYDEEV) show a composition bias toward acidic residues. S125 carries the phosphoserine modification. Y131 carries the post-translational modification Phosphotyrosine. Residues 148 to 174 (RRSEKSWARDRSASRERSLSPRSDRRS) show a composition bias toward basic and acidic residues. Residues S174, S177, and S178 each carry the phosphoserine modification. Position 184 is a phosphothreonine (T184). In terms of domain architecture, PDZ 2 spans 185–263 (KVTLVKSRKN…KLKMVVQRDE (79 aa)). Residues S211 and S240 each carry the phosphoserine modification. Position 266 is a phosphothreonine (T266). Residues S274, S276, S279, S283, S289, S293, S296, S299, S322, S328, S333, S336, and S352 each carry the phosphoserine modification. The segment at 295 to 362 (ASDHSGRSHD…TPVKHADDHT (68 aa)) is disordered. A compositionally biased stretch (basic and acidic residues) spans 298–326 (HSGRSHDRPPRHSRSRSPDQRSEPSDHSR). At T353 the chain carries Phosphothreonine. The 82-residue stretch at 420 to 501 (SMKLVKFRKG…GEEVTILAQK (82 aa)) folds into the PDZ 3 domain. The SH3 domain maps to 515-583 (GDSFYIRTHF…PNKNRAEQLA (69 aa)). Positions 609 to 790 (SKRNLRKSRE…WYGALKEAIQ (182 aa)) constitute a Guanylate kinase-like domain. Phosphoserine is present on residues S616 and S621. An occludin (OCLN)-binding region region spans residues 632-875 (YERVVLREAG…GTPPESAITR (244 aa)). At T808 the chain carries Phosphothreonine. 2 positions are modified to phosphoserine: S809 and S820. Y821 is modified (phosphotyrosine). Phosphoserine occurs at positions 823, 827, and 836. Disordered stretches follow at residues 824–976 (APGS…LRTP) and 1010–1067 (EMMR…SYTD). 5 positions are modified to phosphothreonine: T845, T847, T853, T860, and T867. The span at 878–891 (EPVREDSSGMHHEN) shows a compositional bias: basic and acidic residues. Residues 892–905 (QTYPPYSPQAQPQP) are compositionally biased toward low complexity. Position 911 is a phosphoserine (S911). Composition is skewed to polar residues over residues 933–952 (PETN…TLTN) and 962–976 (PSTS…LRTP). A Phosphoserine modification is found at S967. A Phosphoserine modification is found at S1070. 3 disordered regions span residues 1091–1212 (SYYD…KAGH), 1224–1261 (PLIP…MKPQ), and 1273–1589 (KRSA…EFDS). Positions 1108–1124 (QHPRDLDSRQHPEESSE) are enriched in basic and acidic residues. S1138 bears the Phosphoserine mark. Phosphotyrosine is present on residues Y1139 and Y1164. The interval 1150–1370 (RTSTLRHEEQ…FDRRSFENKP (221 aa)) is actin-binding region (ABR). Positions 1273–1286 (KRSASLENKKDENH) are enriched in basic and acidic residues. Residues 1300-1310 (PGAPIIGPKPT) show a composition bias toward pro residues. Over residues 1335–1346 (PPEDIVRSNHYD) the composition is skewed to basic and acidic residues. Residue Y1353 is modified to Phosphotyrosine. A Phosphoserine modification is found at S1365. A compositionally biased stretch (polar residues) spans 1387 to 1401 (HSQNQTNFSSYSSKG). Residues 1402–1419 (KSPEADAPDRSFGEKRYE) show a composition bias toward basic and acidic residues. At S1412 the chain carries Phosphoserine. Polar residues-rich tracts occupy residues 1460–1471 (NSISLDFQNSLV) and 1514–1523 (AEQTQKTVTP). Positions 1539-1548 (PFERKFESPK) are enriched in basic and acidic residues. Phosphoserine is present on residues S1546 and S1618. The ZU5 domain occupies 1635-1769 (ATARGVFNNN…NCVSVLIDHF (135 aa)).

It belongs to the MAGUK family. Homodimer. Forms heterodimers TJP3. Forms a heterodimer (via PDZ2 domain) with TJP2/ZO2 (via PDZ2 domain). Interacts with OCLN. Interacts with CALM, claudins, CGN/cingulin, CXADR, GJA12, GJD3 and UBN1. Interacts (via ZU5 domain) with CDC42BPB and MYZAP. Interacts (via PDZ domain) with GJA1. Interacts (via PDZ domains) with ANKRD2. Interacts with POPDC1 (via the C-terminus cytoplasmic tail). Interacts with HSPA4. Interacts with KIRREL1. Interacts with DLL1. Interacts with USP53 (via the C-terminal region). Interacts with DNMBP (via C-terminal domain); required for the apical cell-cell junction localization of DNMBP. Interacts with SPEF1. Interacts (via N-terminus) with CTNNA1. Interacts with CLDN18. Interacts with CLDN16 (via TRV motif); this is a prerequisite for anchoring of CLDN16 at the tight junction. Interacts with PKP1; the interaction facilitates TJP1/ZO-1 localization to the plasma membrane. Interacts with PATJ (via PDZ1-6 domains); the interaction is required for attachment and extension of TJP1/ZO1 condensates along the apical cell interface. Phosphorylated at tyrosine redidues in response to epidermal growth factor (EGF). This response is dependent on an intact actin microfilament system. Dephosphorylated by PTPRJ.

It localises to the cell membrane. Its subcellular location is the cell junction. It is found in the tight junction. The protein localises to the gap junction. Its function is as follows. TJP1, TJP2, and TJP3 are closely related scaffolding proteins that link tight junction (TJ) transmembrane proteins such as claudins, junctional adhesion molecules, and occludin to the actin cytoskeleton. Forms a multistranded TJP1/ZO1 condensate which elongates to form a tight junction belt, the belt is anchored at the apical cell membrane via interaction with PATJ. The tight junction acts to limit movement of substances through the paracellular space and as a boundary between the compositionally distinct apical and basolateral plasma membrane domains of epithelial and endothelial cells. Necessary for lumenogenesis, and particularly efficient epithelial polarization and barrier formation. Plays a role in the regulation of cell migration by targeting CDC42BPBb to the leading edge of migrating cells. With TJP2 and TJP3, participates in the junctional retention and stability of the transcription factor DBPA, but is not involved in its shuttling to the nucleus. May play a role in mediating cell morphology changes during ameloblast differentiation via its role in tight junctions. The sequence is that of Tight junction protein 1 from Canis lupus familiaris (Dog).